The primary structure comprises 508 residues: Light-independent protochlorophyllide reductase subunit B (508 aa).

[4Fe-4S] cluster is bound at residue aspartate 36. The Proton donor role is filled by aspartate 294. 429–430 is a substrate binding site; that stretch reads GM.

This sequence belongs to the ChlB/BchB/BchZ family. As to quaternary structure, protochlorophyllide reductase is composed of three subunits; ChlL, ChlN and ChlB. Forms a heterotetramer of two ChlB and two ChlN subunits. [4Fe-4S] cluster serves as cofactor.

It catalyses the reaction chlorophyllide a + oxidized 2[4Fe-4S]-[ferredoxin] + 2 ADP + 2 phosphate = protochlorophyllide a + reduced 2[4Fe-4S]-[ferredoxin] + 2 ATP + 2 H2O. Its pathway is porphyrin-containing compound metabolism; chlorophyll biosynthesis (light-independent). Functionally, component of the dark-operative protochlorophyllide reductase (DPOR) that uses Mg-ATP and reduced ferredoxin to reduce ring D of protochlorophyllide (Pchlide) to form chlorophyllide a (Chlide). This reaction is light-independent. The NB-protein (ChlN-ChlB) is the catalytic component of the complex. The protein is Light-independent protochlorophyllide reductase subunit B of Gloeothece citriformis (strain PCC 7424) (Cyanothece sp. (strain PCC 7424)).